The sequence spans 982 residues: Polyribonucleotide nucleotidyltransferase 2, mitochondrial (982 aa).

The N-terminal 39 residues, 1 to 39 (MSMAVASLRLLARGGRRRARFPAPLSVPGGRAAFLSGAA), are a transit peptide targeting the mitochondrion. Residues 624–678 (PRLATLSFSSDSLRKLLFHRKKIEQETGARVSVSDGTVTIVAKTQPIMDKAIEKV) enclose the KH domain. One can recognise an S1 motif 1 domain in the interval 689–757 (GRTYKGVVSS…LRGNIKLSLK (69 aa)). Disordered stretches follow at residues 792-814 (PSKD…EETP) and 832-892 (QDVT…NDVL). Low complexity-rich tracts occupy residues 846–855 (AKSSPKLSKP) and 868–877 (KKTSGASTTA). The region spanning 920 to 982 (GDVVTAKVYQ…KGIPVFSLLD (63 aa)) is the S1 motif 2 domain.

Belongs to the polyribonucleotide nucleotidyltransferase family.

Its subcellular location is the mitochondrion. The enzyme catalyses RNA(n+1) + phosphate = RNA(n) + a ribonucleoside 5'-diphosphate. Functionally, involved in the 3'-end maturation of mitochondrial mRNAs, rRNAs and tRNAs. Functions as a poly(A) mRNA 3'-5' degrading phosphorylase. In Oryza sativa subsp. japonica (Rice), this protein is Polyribonucleotide nucleotidyltransferase 2, mitochondrial (PNP2).